Consider the following 429-residue polypeptide: Serine--tRNA ligase (429 aa).

Residue 236 to 238 coordinates L-serine; the sequence is TAE. 267 to 269 provides a ligand contact to ATP; the sequence is RSE. An L-serine-binding site is contributed by E290. 354–357 serves as a coordination point for ATP; it reads EVSS. An L-serine-binding site is contributed by S390.

This sequence belongs to the class-II aminoacyl-tRNA synthetase family. Type-1 seryl-tRNA synthetase subfamily. In terms of assembly, homodimer. The tRNA molecule binds across the dimer.

It is found in the cytoplasm. The catalysed reaction is tRNA(Ser) + L-serine + ATP = L-seryl-tRNA(Ser) + AMP + diphosphate + H(+). It carries out the reaction tRNA(Sec) + L-serine + ATP = L-seryl-tRNA(Sec) + AMP + diphosphate + H(+). It functions in the pathway aminoacyl-tRNA biosynthesis; selenocysteinyl-tRNA(Sec) biosynthesis; L-seryl-tRNA(Sec) from L-serine and tRNA(Sec): step 1/1. Functionally, catalyzes the attachment of serine to tRNA(Ser). Is also able to aminoacylate tRNA(Sec) with serine, to form the misacylated tRNA L-seryl-tRNA(Sec), which will be further converted into selenocysteinyl-tRNA(Sec). In Wigglesworthia glossinidia brevipalpis, this protein is Serine--tRNA ligase.